Here is a 232-residue protein sequence, read N- to C-terminus: MAKKIFTSALGTAEPYAYIAKPDYGNEERGFGNPRGVYKVDLTIPNKDPRCQRMVDEIVKCHEEAYAAAVEEYEANPPAVARGKKPLKPYEGDMPFFDNGDGTTTFKFKCYASFQDKKTKETKHINLVVVDSKGKKMEDVPIIGGGSKLKVKYSLVPYKWNTAVGASVKLQLESVMLVELATFGGGEDDWADEVEENGYVASGSAKASKPRDEESWDEDDEESEEADEDGDF.

Residues 189–232 (DWADEVEENGYVASGSAKASKPRDEESWDEDDEESEEADEDGDF) form a disordered region. The dimerization and interaction with the viral DNA polymerase and helicase stretch occupies residues 212–232 (DEESWDEDDEESEEADEDGDF). The segment covering 214–232 (ESWDEDDEESEEADEDGDF) has biased composition (acidic residues).

The protein belongs to the Teseptimavirus single-stranded DNA-binding protein family. In terms of assembly, homodimer. Interacts (via C-terminus) with the viral DNA polymerase. Interacts with the viral helicase/primase. Part of the replicase complex that includes the DNA polymerase, host thioredoxin, the primase/helicase and the single-stranded DNA binding protein.

Single-stranded DNA-binding protein that participates in viral DNA replication, formation of concatemers, recombination and repair of double-stranded breaks. Coats the lagging-strand ssDNA as the replication fork advances and stimulates the activities of viral DNA polymerase and primase/helicase. Coordinates simultaneous synthesis of leading- and lagging-strands. Together with DNA primase/helicase, promotes pairing of two homologous DNA molecules containing complementary single-stranded regions and mediates homologous DNA strand exchange. Also promotes the formation of joint molecules. Disrupts loops, hairpins and other secondary structures present on ssDNA to reduce and eliminate pausing of viral DNA polymerase at specific sites during elongation. In Escherichia phage T7 (Bacteriophage T7), this protein is Single-stranded DNA-binding protein.